The primary structure comprises 466 residues: Cysteine--tRNA ligase (466 aa).

Zn(2+) is bound at residue Cys28. Positions 30–40 match the 'HIGH' region motif; sequence PTVYNYIHIGN. Residues Cys208, His233, and Glu237 each contribute to the Zn(2+) site. The short motif at 265-269 is the 'KMSKS' region element; sequence KMSKS. Lys268 serves as a coordination point for ATP.

The protein belongs to the class-I aminoacyl-tRNA synthetase family. As to quaternary structure, monomer. Zn(2+) is required as a cofactor.

Its subcellular location is the cytoplasm. The enzyme catalyses tRNA(Cys) + L-cysteine + ATP = L-cysteinyl-tRNA(Cys) + AMP + diphosphate. This chain is Cysteine--tRNA ligase, found in Staphylococcus aureus (strain MSSA476).